The chain runs to 100 residues: Large ribosomal subunit protein eL30 (100 aa).

This sequence belongs to the eukaryotic ribosomal protein eL30 family.

The polypeptide is Large ribosomal subunit protein eL30 (rpl30e) (Aeropyrum pernix (strain ATCC 700893 / DSM 11879 / JCM 9820 / NBRC 100138 / K1)).